A 434-amino-acid chain; its full sequence is F-box/FBD/LRR-repeat protein At3g26920 (434 aa).

Residues 16–65 form the F-box domain; sequence EDRISQLPEALLLQILSLLPTKEVVAVSVLAKRWRFLWKMVPSLEFFYYF. LRR repeat units follow at residues 69–95, 100–125, 145–172, 173–198, 219–244, 265–290, and 315–341; these read LERF…HLNM, DPRI…VLKV, TLEL…NLHE, VEFV…VIHQ, VIVE…KIEG, IIDV…SLKV, and TYKP…KIFD. The 51-residue stretch at 353–403 folds into the FBD domain; the sequence is KWNEPKNVPECLLLHLETFVWTCYEGKLENEIELAKYILRNARRLKKATFS.

In Arabidopsis thaliana (Mouse-ear cress), this protein is F-box/FBD/LRR-repeat protein At3g26920.